We begin with the raw amino-acid sequence, 489 residues long: Ent-kaurenoic acid oxidase 2 (489 aa).

A helical transmembrane segment spans residues G5–L25. Residue C436 coordinates heme.

This sequence belongs to the cytochrome P450 family. It depends on heme as a cofactor. In terms of tissue distribution, widely expressed. Highly expressed in influorescence stem, influorescence, and silique tissue. Weakly expressed in cauline and rosette leaves. Expressed at a weaker level in stem and influorescence than AtKAO1/CYP88A3.

Its subcellular location is the endoplasmic reticulum membrane. It catalyses the reaction ent-kaur-16-en-19-oate + 3 reduced [NADPH--hemoprotein reductase] + 3 O2 = gibberellin A12 + 3 oxidized [NADPH--hemoprotein reductase] + 4 H2O + 4 H(+). It carries out the reaction ent-kaur-16-en-19-oate + reduced [NADPH--hemoprotein reductase] + O2 = ent-7alpha-hydroxykaur-16-en-19-oate + oxidized [NADPH--hemoprotein reductase] + H2O + H(+). The catalysed reaction is ent-7alpha-hydroxykaur-16-en-19-oate + reduced [NADPH--hemoprotein reductase] + O2 = gibberellin A12 aldehyde + oxidized [NADPH--hemoprotein reductase] + 2 H2O + H(+). The enzyme catalyses gibberellin A12 aldehyde + reduced [NADPH--hemoprotein reductase] + O2 = gibberellin A12 + oxidized [NADPH--hemoprotein reductase] + H2O + 2 H(+). The protein operates within plant hormone biosynthesis; gibberellin biosynthesis. Functionally, catalyzes three successive oxidations of ent-kaurenoic acid giving gibberellin 12 (GA12), a key step in gibberellins (GAs) biosynthesis. GAs, which are involved many processes, including stem elongation, play a central role in plant development. In Arabidopsis thaliana (Mouse-ear cress), this protein is Ent-kaurenoic acid oxidase 2.